A 1165-amino-acid chain; its full sequence is uncharacterized protein (1165 aa).

Residues 422–442 (EAAPPRPPRKSKAPEPTGDKA) are disordered.

This is an uncharacterized protein from Frog virus 3 (isolate Goorha) (FV-3).